A 148-amino-acid polypeptide reads, in one-letter code: Receptor activity-modifying protein 1 (148 aa).

An N-terminal signal peptide occupies residues 1–26; it reads MARALCRLPRRGLWLLLAHHLFMTTA. 3 cysteine pairs are disulfide-bonded: C27–C82, C40–C72, and C57–C104. The Extracellular portion of the chain corresponds to 27-118; that stretch reads CQEANYGALL…RAVRDPPGSI (92 aa). The helical transmembrane segment at 119–140 threads the bilayer; that stretch reads LYPFIVVPITVTLLVTALVVWQ. Over 141–148 the chain is Cytoplasmic; it reads SKRTEGIV.

It belongs to the RAMP family. As to quaternary structure, heterodimer of CALCRL and RAMP1; the interaction induces allosteric modulation of CALCRL function and CGRP1/CALCA and CGRP2/CALCB ligand specificity. Heterodimer of CALCR and RAMP1; interaction forms the AMYR1 receptor complex for amylin/IAPP and CGRP1/CALCA ligands. In terms of tissue distribution, expressed in many tissues including the uterus, bladder, brain, pancreas and gastro-intestinal tract.

It is found in the cell membrane. Accessory protein that interacts with and modulates the function of G-protein coupled receptors including calcitonin gene-related peptide type 1 receptor (CALCRL) and calcitonin receptor (CALCR). Required for the transport of CALCRL to the plasma membrane. Together with CALCRL, form the receptor complex for the calcitonin gene-related peptides CGRP1/CALCA and CGRP2/CALCB. Together with CALCR, form the AMYR1 receptor complex for amylin/IAPP and CGRP1/CALCA. This chain is Receptor activity-modifying protein 1, found in Homo sapiens (Human).